Reading from the N-terminus, the 428-residue chain is D-inositol 3-phosphate glycosyltransferase (428 aa).

Residue His-17 participates in 1D-myo-inositol 3-phosphate binding. UDP-N-acetyl-alpha-D-glucosamine is bound by residues 23–24 (QP) and Gly-31. Residues 28–33 (DAGGMN), Arg-86, Tyr-119, Thr-143, and Arg-163 contribute to the 1D-myo-inositol 3-phosphate site. 2 residues coordinate UDP-N-acetyl-alpha-D-glucosamine: Arg-237 and Lys-242. Positions 312, 313, and 315 each coordinate Mg(2+). Residues Glu-325 and Glu-333 each contribute to the UDP-N-acetyl-alpha-D-glucosamine site. Thr-339 contributes to the Mg(2+) binding site.

This sequence belongs to the glycosyltransferase group 1 family. MshA subfamily. In terms of assembly, homodimer.

It catalyses the reaction 1D-myo-inositol 3-phosphate + UDP-N-acetyl-alpha-D-glucosamine = 1D-myo-inositol 2-acetamido-2-deoxy-alpha-D-glucopyranoside 3-phosphate + UDP + H(+). In terms of biological role, catalyzes the transfer of a N-acetyl-glucosamine moiety to 1D-myo-inositol 3-phosphate to produce 1D-myo-inositol 2-acetamido-2-deoxy-glucopyranoside 3-phosphate in the mycothiol biosynthesis pathway. The chain is D-inositol 3-phosphate glycosyltransferase from Thermobispora bispora (strain ATCC 19993 / DSM 43833 / CBS 139.67 / JCM 10125 / KCTC 9307 / NBRC 14880 / R51).